The primary structure comprises 128 residues: Glycine cleavage system H protein (128 aa).

The region spanning 24–106 is the Lipoyl-binding domain; that stretch reads LVRIGISEFA…HGEGWLLIIR (83 aa). Residue K65 is modified to N6-lipoyllysine.

The protein belongs to the GcvH family. The glycine cleavage system is composed of four proteins: P, T, L and H. (R)-lipoate serves as cofactor.

Functionally, the glycine cleavage system catalyzes the degradation of glycine. The H protein shuttles the methylamine group of glycine from the P protein to the T protein. In Prochlorococcus marinus (strain NATL2A), this protein is Glycine cleavage system H protein.